Reading from the N-terminus, the 938-residue chain is MSDYKSTLNLPETGFPMRGDLAKREPGMLARWTDDDLYGIIRAAKKGKKTFILHDGPPYANGSIHIGHSVNKILKDIIVKSKGLSGYDSPYVPGWDCHGLPIELKVEQEYGKPGEKFTAAEFRAKCREYAATQVDGQRKDFIRLGVLGDWSHPYLTMDFKTEANIIRALGKIIGNGHLHKGAKPVHWCVDCRSALAEAEVEYYDKTSPSIDVAFQAVDQDALKAKFGVSNVNGPISLVIWTTTPWTLPANRAISIAPDFDYALVQIDGQAVILAKDLVESVMQRIGVTDYTILGTVKGAELELLRFTHPFMGFDVPAILGDHVTLDAGTGAVHTAPGHGPDDYVIGQKYGLETANPVGPDGTYLPGTYPTLDGVNVFKANDIVVALLQEKGALLHVEKMQHSYPCCWRHKTPIIFRATPQWFVSMDQKGLRAQSLKEIKGVQWLPDWGQARIESMVANRPDWCISRQRTWGVPMSLFVHKDTEELHPRTLELMEEVAKRVEVDGIQAWWDLDAKEILGDEADQYVKVPDTLDVWFDSGSTHSSVVDVRPEFAGHAADMYLEGSDQHRGWFMSSLMISTAMKGKAPYRQVLTHGFTVDGQGRKMSKSIGNTVSPQDVMNKLGADILRLWVASTDYTGEMAVSDEILKRAADSYRRIRNTARFLLANLNGFDPAKDMVKPEEMVVLDRWAVGCAKAAQEDILKAYEAYDFHEVVQRLMRFCSVEMGSFYLDIIKDRQYTAKADSVARRSCQTALYHIAEALVRWMAPILSFTADEVWGYLPGEREKYVFTGEWYEGLFGLADSEAMNDAFWDELLKVRGEVNKVIEQARADKKVGGSLEAAVTLYAEPELAAKLTALGDELRFVLLTSGATVADYNDAPADAQQSEVLKGLKVALSKAEGEKCPRCWHYTQDVGKVAEHAEICGRCVSNVAGDGEKRKFA.

The short motif at 58–68 (PYANGSIHIGH) is the 'HIGH' region element. N6-acetyllysine is present on lysine 183. Residue glutamate 561 participates in L-isoleucyl-5'-AMP binding. The 'KMSKS' region motif lies at 602-606 (KMSKS). Lysine 605 serves as a coordination point for ATP. 4 residues coordinate Zn(2+): cysteine 901, cysteine 904, cysteine 921, and cysteine 924.

The protein belongs to the class-I aminoacyl-tRNA synthetase family. IleS type 1 subfamily. In terms of assembly, monomer. Zn(2+) is required as a cofactor.

It is found in the cytoplasm. The catalysed reaction is tRNA(Ile) + L-isoleucine + ATP = L-isoleucyl-tRNA(Ile) + AMP + diphosphate. Catalyzes the attachment of isoleucine to tRNA(Ile). As IleRS can inadvertently accommodate and process structurally similar amino acids such as valine, to avoid such errors it has two additional distinct tRNA(Ile)-dependent editing activities. One activity is designated as 'pretransfer' editing and involves the hydrolysis of activated Val-AMP. The other activity is designated 'posttransfer' editing and involves deacylation of mischarged Val-tRNA(Ile). In Shigella flexneri, this protein is Isoleucine--tRNA ligase.